The sequence spans 293 residues: Acetyl-coenzyme A carboxylase carboxyl transferase subunit beta (293 aa).

A CoA carboxyltransferase N-terminal domain is found at Leu29–Ile293. The Zn(2+) site is built by Cys33, Cys36, Cys52, and Cys55. The C4-type zinc-finger motif lies at Cys33 to Cys55.

It belongs to the AccD/PCCB family. As to quaternary structure, acetyl-CoA carboxylase is a heterohexamer composed of biotin carboxyl carrier protein (AccB), biotin carboxylase (AccC) and two subunits each of ACCase subunit alpha (AccA) and ACCase subunit beta (AccD). It depends on Zn(2+) as a cofactor.

The protein localises to the cytoplasm. It catalyses the reaction N(6)-carboxybiotinyl-L-lysyl-[protein] + acetyl-CoA = N(6)-biotinyl-L-lysyl-[protein] + malonyl-CoA. It participates in lipid metabolism; malonyl-CoA biosynthesis; malonyl-CoA from acetyl-CoA: step 1/1. In terms of biological role, component of the acetyl coenzyme A carboxylase (ACC) complex. Biotin carboxylase (BC) catalyzes the carboxylation of biotin on its carrier protein (BCCP) and then the CO(2) group is transferred by the transcarboxylase to acetyl-CoA to form malonyl-CoA. The polypeptide is Acetyl-coenzyme A carboxylase carboxyl transferase subunit beta (Prochlorococcus marinus (strain MIT 9215)).